A 918-amino-acid polypeptide reads, in one-letter code: Rap guanine nucleotide exchange factor 3 (918 aa).

The residue at position 79 (Ser79) is a Phosphoserine. A DEP domain is found at 110–186 (ATYPTLIRDR…RDAQFYRFPG (77 aa)). Residues 218-242 (TVALRKPPGQRTDEELDLIFEELLH) are interaction with PDE3B. 3',5'-cyclic AMP is bound by residues 311 to 314 (GQLA) and 321 to 322 (RA). Residues 369–388 (TSQGAGPSRPPTPGRNRYTV) form a disordered region. An N-terminal Ras-GEF domain is found at 384–521 (NRYTVMSGTP…EQYPERRRHH (138 aa)). The tract at residues 398–422 (ELLLEAMRPDSSAHDPTETFLSDFL) is interaction with PDE3B. Ser531 and Ser859 each carry phosphoserine. Residues 665–884 (SAKDLAGQLT…SRISTCSEQS (220 aa)) enclose the Ras-GEF domain.

As to quaternary structure, interacts with PDE3B and PIK3R6; form a signaling complex that regulates phosphatidylinositol 3-kinase gamma in angiogenesis.

The protein resides in the cytoplasm. The protein localises to the membrane. Guanine nucleotide exchange factor (GEF) for RAP1A and RAP2A small GTPases that is activated by binding cAMP. Through simultaneous binding of PDE3B to RAPGEF3 and PIK3R6 is assembled in a signaling complex in which it activates the PI3K gamma complex and which is involved in angiogenesis. Plays a role in the modulation of the cAMP-induced dynamic control of endothelial barrier function through a pathway that is independent on Rho-mediated signaling. Required for the actin rearrangement at cell-cell junctions, such as stress fibers and junctional actin. This Mus musculus (Mouse) protein is Rap guanine nucleotide exchange factor 3 (Rapgef3).